Here is a 493-residue protein sequence, read N- to C-terminus: Glutamyl-tRNA(Gln) amidotransferase subunit A (493 aa).

Active-site charge relay system residues include Lys79 and Ser159. Catalysis depends on Ser183, which acts as the Acyl-ester intermediate.

Belongs to the amidase family. GatA subfamily. In terms of assembly, heterotrimer of A, B and C subunits.

It carries out the reaction L-glutamyl-tRNA(Gln) + L-glutamine + ATP + H2O = L-glutaminyl-tRNA(Gln) + L-glutamate + ADP + phosphate + H(+). Functionally, allows the formation of correctly charged Gln-tRNA(Gln) through the transamidation of misacylated Glu-tRNA(Gln) in organisms which lack glutaminyl-tRNA synthetase. The reaction takes place in the presence of glutamine and ATP through an activated gamma-phospho-Glu-tRNA(Gln). This Brucella abortus (strain S19) protein is Glutamyl-tRNA(Gln) amidotransferase subunit A.